We begin with the raw amino-acid sequence, 255 residues long: Proteasome subunit alpha type-3 (255 aa).

An N-acetylserine modification is found at S2. An N6-acetyllysine mark is found at K57, K206, and K230. Residues S243 and S250 each carry the phosphoserine modification.

Belongs to the peptidase T1A family. The 26S proteasome consists of a 20S proteasome core and two 19S regulatory subunits. The 20S proteasome core is a barrel-shaped complex made of 28 subunits that are arranged in four stacked rings. The two outer rings are each formed by seven alpha subunits, and the two inner rings are formed by seven beta subunits. The proteolytic activity is exerted by three beta-subunits PSMB5, PSMB6 and PSMB7. Interacts with AURKB. Interacts with CDKN1A. Interacts with MDM2 and RB1. Interacts with the C-terminus of TBXA2R isoform 2. Interacts with DNAJB2.

It localises to the cytoplasm. Its subcellular location is the nucleus. Functionally, component of the 20S core proteasome complex involved in the proteolytic degradation of most intracellular proteins. This complex plays numerous essential roles within the cell by associating with different regulatory particles. Associated with two 19S regulatory particles, forms the 26S proteasome and thus participates in the ATP-dependent degradation of ubiquitinated proteins. The 26S proteasome plays a key role in the maintenance of protein homeostasis by removing misfolded or damaged proteins that could impair cellular functions, and by removing proteins whose functions are no longer required. Associated with the PA200 or PA28, the 20S proteasome mediates ubiquitin-independent protein degradation. This type of proteolysis is required in several pathways including spermatogenesis (20S-PA200 complex) or generation of a subset of MHC class I-presented antigenic peptides (20S-PA28 complex). Binds to the C-terminus of CDKN1A and thereby mediates its degradation. Negatively regulates the membrane trafficking of the cell-surface thromboxane A2 receptor (TBXA2R) isoform 2. The sequence is that of Proteasome subunit alpha type-3 (PSMA3) from Bos taurus (Bovine).